Consider the following 328-residue polypeptide: Cytochrome c biogenesis protein CcsA (328 aa).

8 consecutive transmembrane segments (helical) span residues isoleucine 13–leucine 33, glycine 46–glycine 66, leucine 73–phenylalanine 93, leucine 101–leucine 121, methionine 146–isoleucine 166, isoleucine 234–asparagine 254, tryptophan 263–isoleucine 283, and alanine 295–leucine 315.

It belongs to the CcmF/CycK/Ccl1/NrfE/CcsA family. May interact with Ccs1.

The protein resides in the plastid. It is found in the chloroplast thylakoid membrane. Functionally, required during biogenesis of c-type cytochromes (cytochrome c6 and cytochrome f) at the step of heme attachment. The chain is Cytochrome c biogenesis protein CcsA from Arabidopsis thaliana (Mouse-ear cress).